Reading from the N-terminus, the 528-residue chain is Cytochrome P450 monooxygenase ppsD (528 aa).

A helical transmembrane segment spans residues 2 to 21 (LVLVSLVLCLTGFCLLQWAL). A glycan (N-linked (GlcNAc...) asparagine) is linked at Asn-137. A heme-binding site is contributed by Cys-441. Residues Asn-450 and Asn-463 are each glycosylated (N-linked (GlcNAc...) asparagine).

It belongs to the cytochrome P450 family. Heme is required as a cofactor.

The protein resides in the membrane. Cytochrome P450 monooxygenase; part of the gene cluster that mediates the biosynthesis of 2,4'-dihydroxy-3'-methoxypropiophenone. The first step of the pathway is the conversion of acetate into acetyl-CoA by the acyl-CoA ligase ppsA. Acetyl-CoA is then used as a starter unit by the polyketide synthase ppsB and condensed with 4 malonyl-CoA unit to produce the pentaketide backbone. During polyketide extension, the polykedite chain is probably reduced and dehydrated by the KR and PT domains, respectively. O-methylation seems to be catalyzed by an unknown methyltransferase rather than by the CMeT domain of ppsB. Two hydroxylations and one further decarboxylation step catalyzed by yet unknown enzymes are then required to yield 4'-hydroxy-3'-methoxypropiophenone. PpsC functions as a carrier protein to transport 4'-hydroxy-3'-methoxypropiophenone to a specific cell compartment in which 4'-hydroxy-3'-methoxypropiophenone is hydroxylated to 2,4'-dihydroxy-3'-methoxypropiophenone by a still to be identified enzyme. In Aspergillus oryzae (strain ATCC 42149 / RIB 40) (Yellow koji mold), this protein is Cytochrome P450 monooxygenase ppsD.